A 142-amino-acid polypeptide reads, in one-letter code: Deoxyuridine 5'-triphosphate nucleotidohydrolase (142 aa).

Substrate-binding positions include 62–64 (RSG), Asn-75, and 79–81 (TID).

The protein belongs to the dUTPase family. Requires Mg(2+) as cofactor.

It carries out the reaction dUTP + H2O = dUMP + diphosphate + H(+). The protein operates within pyrimidine metabolism; dUMP biosynthesis; dUMP from dCTP (dUTP route): step 2/2. In terms of biological role, this enzyme is involved in nucleotide metabolism: it produces dUMP, the immediate precursor of thymidine nucleotides and it decreases the intracellular concentration of dUTP so that uracil cannot be incorporated into DNA. The chain is Deoxyuridine 5'-triphosphate nucleotidohydrolase from Crocosphaera subtropica (strain ATCC 51142 / BH68) (Cyanothece sp. (strain ATCC 51142)).